A 183-amino-acid polypeptide reads, in one-letter code: Adenine phosphoribosyltransferase (183 aa).

The protein belongs to the purine/pyrimidine phosphoribosyltransferase family. In terms of assembly, homodimer.

Its subcellular location is the cytoplasm. The enzyme catalyses AMP + diphosphate = 5-phospho-alpha-D-ribose 1-diphosphate + adenine. It functions in the pathway purine metabolism; AMP biosynthesis via salvage pathway; AMP from adenine: step 1/1. Its function is as follows. Catalyzes a salvage reaction resulting in the formation of AMP, that is energically less costly than de novo synthesis. The chain is Adenine phosphoribosyltransferase from Corynebacterium kroppenstedtii (strain DSM 44385 / JCM 11950 / CIP 105744 / CCUG 35717).